Consider the following 146-residue polypeptide: Large ribosomal subunit protein bL21 (146 aa).

The segment at 103-146 is disordered; it reads DGKSPTIGPRPKKEKAVEPVEGASDDKPRRAAKKTAAKTAEDAD. A compositionally biased stretch (basic and acidic residues) spans 116–131; the sequence is EKAVEPVEGASDDKPR.

The protein belongs to the bacterial ribosomal protein bL21 family. In terms of assembly, part of the 50S ribosomal subunit. Contacts protein L20.

In terms of biological role, this protein binds to 23S rRNA in the presence of protein L20. The sequence is that of Large ribosomal subunit protein bL21 from Nitrobacter winogradskyi (strain ATCC 25391 / DSM 10237 / CIP 104748 / NCIMB 11846 / Nb-255).